A 317-amino-acid polypeptide reads, in one-letter code: DNA-directed RNA polymerase subunit alpha (317 aa).

An alpha N-terminal domain (alpha-NTD) region spans residues 1 to 234 (MKQFVRPEFI…AHLEFFIDLN (234 aa)). The interval 249–317 (DDKELDRTVE…ASLGLAFRQS (69 aa)) is alpha C-terminal domain (alpha-CTD).

The protein belongs to the RNA polymerase alpha chain family. Homodimer. The RNAP catalytic core consists of 2 alpha, 1 beta, 1 beta' and 1 omega subunit. When a sigma factor is associated with the core the holoenzyme is formed, which can initiate transcription.

The catalysed reaction is RNA(n) + a ribonucleoside 5'-triphosphate = RNA(n+1) + diphosphate. Its function is as follows. DNA-dependent RNA polymerase catalyzes the transcription of DNA into RNA using the four ribonucleoside triphosphates as substrates. This Mycoplasma capricolum subsp. capricolum (strain California kid / ATCC 27343 / NCTC 10154) protein is DNA-directed RNA polymerase subunit alpha.